Consider the following 274-residue polypeptide: tRNA pseudouridine synthase A (274 aa).

Catalysis depends on Asp-57, which acts as the Nucleophile. Tyr-115 lines the substrate pocket.

The protein belongs to the tRNA pseudouridine synthase TruA family. As to quaternary structure, homodimer.

It catalyses the reaction uridine(38/39/40) in tRNA = pseudouridine(38/39/40) in tRNA. Functionally, formation of pseudouridine at positions 38, 39 and 40 in the anticodon stem and loop of transfer RNAs. The protein is tRNA pseudouridine synthase A of Frankia casuarinae (strain DSM 45818 / CECT 9043 / HFP020203 / CcI3).